Consider the following 943-residue polypeptide: Lactoferrin-binding protein A (943 aa).

The first 27 residues, 1–27 (MNKKHGFPLTLTALAIATAFPAYAAQA), serve as a signal peptide directing secretion. One can recognise a TBDR plug domain in the interval 52–178 (RRSKEATGLG…LGGAVAFRTK (127 aa)). Positions 189–943 (SWGIQAKTAY…NFSLALEMKF (755 aa)) constitute a TBDR beta-barrel domain. The TonB C-terminal box signature appears at 926–943 (GRYAAPGRNFSLALEMKF).

Belongs to the TonB-dependent receptor family.

It localises to the cell outer membrane. Unknown. May be an iron-siderophore receptor. This chain is Lactoferrin-binding protein A (lbpA), found in Neisseria meningitidis serogroup B (strain ATCC BAA-335 / MC58).